The sequence spans 362 residues: 3-dehydroquinate synthase (362 aa).

NAD(+) contacts are provided by residues 74–79 (DGEGYK), 108–112 (GVIGD), 132–133 (TT), Lys-145, Lys-154, and 172–175 (TLDT). The Zn(2+) site is built by Glu-187, His-250, and His-267.

Belongs to the sugar phosphate cyclases superfamily. Dehydroquinate synthase family. Co(2+) is required as a cofactor. Zn(2+) serves as cofactor. Requires NAD(+) as cofactor.

It is found in the cytoplasm. The enzyme catalyses 7-phospho-2-dehydro-3-deoxy-D-arabino-heptonate = 3-dehydroquinate + phosphate. It functions in the pathway metabolic intermediate biosynthesis; chorismate biosynthesis; chorismate from D-erythrose 4-phosphate and phosphoenolpyruvate: step 2/7. Functionally, catalyzes the conversion of 3-deoxy-D-arabino-heptulosonate 7-phosphate (DAHP) to dehydroquinate (DHQ). The protein is 3-dehydroquinate synthase of Citrifermentans bemidjiense (strain ATCC BAA-1014 / DSM 16622 / JCM 12645 / Bem) (Geobacter bemidjiensis).